We begin with the raw amino-acid sequence, 596 residues long: Aspartic proteinase MKC7 (596 aa).

An N-terminal signal peptide occupies residues 1–22 (MKLSVLTFVVDALLVCSSIVDA). The propeptide occupies 23–65 (GVTDFPSLPSNEVYVKMNFQKKYGSSFENALDDTKGRTRLMTR). The region spanning 81-468 (YSVELDIGTP…DLDNMEISMA (388 aa)) is the Peptidase A1 domain. Residue Asp-99 is part of the active site. Residues Asn-180, Asn-190, Asn-219, Asn-229, Asn-232, Asn-286, and Asn-346 are each glycosylated (N-linked (GlcNAc...) asparagine). The active site involves Asp-360. N-linked (GlcNAc...) asparagine glycosylation is found at Asn-471 and Asn-517. Low complexity predominate over residues 530–570 (ATSSSSSKGQKTQTSTTALSISKSTSSTSSTGMLSPTSSSS). Positions 530–578 (ATSSSSSKGQKTQTSTTALSISKSTSSTSSTGMLSPTSSSSTRKENGGH) are disordered. Asn-575 carries the GPI-anchor amidated asparagine lipid modification. The propeptide at 576–596 (GGHNLNPPFFARFITAIFHHI) is removed in mature form.

This sequence belongs to the peptidase A1 family.

It localises to the cell membrane. It catalyses the reaction Hydrolyzes various precursor proteins with Arg or Lys in P1, and commonly Arg or Lys also in P2. The P3 amino acid is usually non-polar, but otherwise additional basic amino acids are favorable in both non-prime and prime positions.. Functionally, cleaves proteins C-terminally to the most C-terminal basic residue. Can process the alpha-mating factor precursor. Required for cell wall integrity. This is Aspartic proteinase MKC7 (MKC7) from Saccharomyces cerevisiae (strain ATCC 204508 / S288c) (Baker's yeast).